The primary structure comprises 240 residues: RNA polymerase sigma factor SigI (240 aa).

The Polymerase core binding motif lies at Asp56 to Ile69. The segment at residues Leu194–Lys213 is a DNA-binding region (H-T-H motif).

It belongs to the sigma-70 factor family. SigI subfamily. In terms of assembly, interacts with RsgI.

The protein resides in the cytoplasm. With respect to regulation, negatively regulated by the anti-sigma-I factor RsgI. Functionally, sigma factors are initiation factors that promote the attachment of RNA polymerase to specific initiation sites and are then released. This sigma factor contributes to both stress response and virulence gene expression. This Bacillus anthracis protein is RNA polymerase sigma factor SigI.